The primary structure comprises 309 residues: DDRGK domain-containing protein 1 (309 aa).

Residues 1–2 (MD) are Lumenal-facing. Residues 3-23 (LIILVGIAVALLVVIVTLYLL) form a helical membrane-spanning segment. Over 24–309 (QKKNAAPETK…ISAGGGEASS (286 aa)) the chain is Cytoplasmic. Disordered stretches follow at residues 32 to 53 (TKVA…VPRR) and 79 to 175 (ALPA…KEER). Residues 87–96 (DHEDEGQVDG) show a composition bias toward acidic residues. A compositionally biased stretch (basic and acidic residues) spans 107-175 (LDEKMGAKKR…DAERLAKEER (69 aa)). Residues 120–177 (EAKEQKRLQREQELHDREQRKVKEAKEEAERKQQEDLEAEAERKRVDAERLAKEERER) are a coiled coil.

The protein belongs to the DDRGK1 family. In terms of assembly, interacts with Atg9; the interaction is transient.

The protein localises to the endoplasmic reticulum membrane. In terms of biological role, substrate adapter for ufmylation, the covalent attachment of the ubiquitin-like modifier UFM1 to substrate proteins. Required for ufmylation of Atg9; protects the nervous system during aging, possibly by stabilizing Atg9 and supporting its function. In Drosophila melanogaster (Fruit fly), this protein is DDRGK domain-containing protein 1.